Here is a 566-residue protein sequence, read N- to C-terminus: Glucose-6-phosphate isomerase (566 aa).

Catalysis depends on glutamate 374, which acts as the Proton donor. Active-site residues include histidine 405 and lysine 529.

The protein belongs to the GPI family.

The protein resides in the cytoplasm. It carries out the reaction alpha-D-glucose 6-phosphate = beta-D-fructose 6-phosphate. The protein operates within carbohydrate biosynthesis; gluconeogenesis. It functions in the pathway carbohydrate degradation; glycolysis; D-glyceraldehyde 3-phosphate and glycerone phosphate from D-glucose: step 2/4. Functionally, catalyzes the reversible isomerization of glucose-6-phosphate to fructose-6-phosphate. In Bifidobacterium longum (strain NCC 2705), this protein is Glucose-6-phosphate isomerase.